Here is a 174-residue protein sequence, read N- to C-terminus: Nascent polypeptide-associated complex subunit alpha (174 aa).

Serine 2 is subject to N-acetylserine. The NAC-A/B domain occupies 14–78 (NKNEKKAREL…AKVDNFTQKL (65 aa)). The tract at residues 85-137 (AQASGIMPSNEDVATKSPEDIQADMQAAAEGSVNAAAEEDDEEGEVDAGDLNK) is disordered. Residue serine 93 is modified to Phosphoserine. Residues 111-120 (AAAEGSVNAA) show a composition bias toward low complexity. A compositionally biased stretch (acidic residues) spans 121–132 (AEEDDEEGEVDA). The UBA domain occupies 135–174 (LNKDDIELVVQQTNVSKNQAIKALKAHNGDLVNAIMSLSK).

It belongs to the NAC-alpha family. Part of the nascent polypeptide-associated complex (NAC), consisting of EGD2 and either EGD1 or BTT1. NAC associates with ribosomes via EGD1 or BTT1, and with the CCR4-NOT complex.

It localises to the cytoplasm. Its subcellular location is the nucleus. Component of the nascent polypeptide-associated complex (NAC), a dynamic component of the ribosomal exit tunnel, protecting the emerging polypeptides from interaction with other cytoplasmic proteins to ensure appropriate nascent protein targeting. The NAC complex also promotes mitochondrial protein import by enhancing productive ribosome interactions with the outer mitochondrial membrane and blocks the inappropriate interaction of ribosomes translating non-secretory nascent polypeptides with translocation sites in the membrane of the endoplasmic reticulum. EGD2 may also be involved in transcription regulation. The protein is Nascent polypeptide-associated complex subunit alpha (EGD2) of Saccharomyces cerevisiae (strain YJM789) (Baker's yeast).